Reading from the N-terminus, the 282-residue chain is MEFPCTLTLKELLESGAHFGHQTSRWNPRMKPFIFEEKNGLYIIDLAKTLAQLKKAVACIQTTIGQEKSILFVGTKKQAKQIIREAAIECGEFFASERWLGGMLTNMATIRNSVKTLNRIELDLEASNSGLTKKELALLAKRHRKLLNNLEGVRHMNSLPGLLIVIDPGYERIAVAEAGKLGIPVMALVDTNCDPTPINHVIPCNDDSMKSIRLIVNVLKDAVIDAKKRLGIGILSPVRPAERPAEEAVEELPLPTGEAQDEASSKEGFLLWADIDNCEALK.

The disordered stretch occupies residues 245–265 (AEEAVEELPLPTGEAQDEASS).

This sequence belongs to the universal ribosomal protein uS2 family.

This Chlamydia trachomatis serovar A (strain ATCC VR-571B / DSM 19440 / HAR-13) protein is Small ribosomal subunit protein uS2.